Consider the following 95-residue polypeptide: Co-chaperonin GroES (95 aa).

This sequence belongs to the GroES chaperonin family. In terms of assembly, heptamer of 7 subunits arranged in a ring. Interacts with the chaperonin GroEL.

Its subcellular location is the cytoplasm. In terms of biological role, together with the chaperonin GroEL, plays an essential role in assisting protein folding. The GroEL-GroES system forms a nano-cage that allows encapsulation of the non-native substrate proteins and provides a physical environment optimized to promote and accelerate protein folding. GroES binds to the apical surface of the GroEL ring, thereby capping the opening of the GroEL channel. In Chlorobium luteolum (strain DSM 273 / BCRC 81028 / 2530) (Pelodictyon luteolum), this protein is Co-chaperonin GroES.